Here is a 228-residue protein sequence, read N- to C-terminus: HTH-type transcriptional regulator ArcR (228 aa).

22 to 141 contacts a nucleoside 3',5'-cyclic phosphate; that stretch reads SYINIPVGVL…VKLFSLLSET (120 aa). In terms of domain architecture, HTH crp-type spans 155-228; the sequence is KLAKERVTKI…SKNWLVSKDL (74 aa). Residues 188–207 constitute a DNA-binding region (H-T-H motif); it reads IQLLSDMAGISRETTSHIIN.

The protein resides in the cytoplasm. Its function is as follows. Positively regulates the expression of the arcABDCR operon under anaerobic conditions, thus playing an essential role in arginine catabolism. May also control the expression of genes encoding proteins which are involved in anaerobic metabolism. Can bind cyclic AMP. The polypeptide is HTH-type transcriptional regulator ArcR (arcR) (Staphylococcus epidermidis (strain ATCC 12228 / FDA PCI 1200)).